Reading from the N-terminus, the 522-residue chain is Putative aldehyde dehydrogenase-like protein C21C3 (522 aa).

The active-site Proton acceptor is glutamate 239. Cysteine 273 serves as the catalytic Nucleophile.

The protein belongs to the aldehyde dehydrogenase family.

The protein resides in the cytoplasm. It is found in the nucleus. The polypeptide is Putative aldehyde dehydrogenase-like protein C21C3 (Schizosaccharomyces pombe (strain 972 / ATCC 24843) (Fission yeast)).